Consider the following 279-residue polypeptide: 2-dehydro-3-deoxyphosphooctonate aldolase (279 aa).

The protein belongs to the KdsA family.

It is found in the cytoplasm. It carries out the reaction D-arabinose 5-phosphate + phosphoenolpyruvate + H2O = 3-deoxy-alpha-D-manno-2-octulosonate-8-phosphate + phosphate. Its pathway is carbohydrate biosynthesis; 3-deoxy-D-manno-octulosonate biosynthesis; 3-deoxy-D-manno-octulosonate from D-ribulose 5-phosphate: step 2/3. The protein operates within bacterial outer membrane biogenesis; lipopolysaccharide biosynthesis. The sequence is that of 2-dehydro-3-deoxyphosphooctonate aldolase from Desulfosudis oleivorans (strain DSM 6200 / JCM 39069 / Hxd3) (Desulfococcus oleovorans).